We begin with the raw amino-acid sequence, 531 residues long: SWI/SNF-related matrix-associated actin-dependent regulator of chromatin subfamily D member 2 (531 aa).

Residues Arg-81 and Arg-104 each carry the asymmetric dimethylarginine modification. Ser-203 is subject to Phosphoserine. Residues Ser-205–Lys-226 are disordered. At Thr-217 the chain carries Phosphothreonine. A Glycyl lysine isopeptide (Lys-Gly) (interchain with G-Cter in SUMO2) cross-link involves residue Lys-226. One can recognise an SWIB/MDM2 domain in the interval His-306–His-383.

The protein belongs to the SMARCD family. As to quaternary structure, component of the multiprotein chromatin-remodeling complexes SWI/SNF: SWI/SNF-A (BAF), SWI/SNF-B (PBAF) and related complexes. The canonical complex contains a catalytic subunit (either SMARCA4/BRG1/BAF190A or SMARCA2/BRM/BAF190B), and at least SMARCE1, ACTL6A/BAF53, SMARCC1/BAF155, SMARCC2/BAF170, and SMARCB1/SNF5/BAF47. Other subunits specific to each of the complexes may also be present permitting several possible combinations developmentally and tissue specific. Component of the BAF complex, which includes at least actin (ACTB), ARID1A/BAF250A, ARID1B/BAF250B, SMARCA2/BRM, SMARCA4/BRG1, ACTL6A/BAF53, ACTL6B/BAF53B, SMARCE1/BAF57, SMARCC1/BAF155, SMARCC2/BAF170, SMARCB1/SNF5/INI1, and one or more SMARCD1/BAF60A, SMARCD2/BAF60B, or SMARCD3/BAF60C. In muscle cells, the BAF complex also contains DPF3. Component of the SWI/SNF-B (PBAF) chromatin remodeling complex, at least composed of SMARCA4/BRG1, SMARCB1/BAF47/SNF5, ACTL6A/BAF53A or ACTL6B/BAF53B, SMARCE1/BAF57, SMARCD1/BAF60A, SMARCD2/BAF60B, perhaps SMARCD3/BAF60C, SMARCC1/BAF155, SMARCC2/BAF170, PBRM1/BAF180, ARID2/BAF200 and actin (ACTB). Interacts with UNKL. Interacts with CEBPE. Post-translationally, ubiquitinated through a signaling process involving RAC1 and the RING finger protein UNKL. Isoform 2 is expressed in the pancreas.

Its subcellular location is the nucleus. Involved in transcriptional activation and repression of select genes by chromatin remodeling (alteration of DNA-nucleosome topology). Component of SWI/SNF chromatin remodeling complexes that carry out key enzymatic activities, changing chromatin structure by altering DNA-histone contacts within a nucleosome in an ATP-dependent manner. Critical regulator of myeloid differentiation, controlling granulocytopoiesis and the expression of genes involved in neutrophil granule formation. In Homo sapiens (Human), this protein is SWI/SNF-related matrix-associated actin-dependent regulator of chromatin subfamily D member 2 (SMARCD2).